Here is a 585-residue protein sequence, read N- to C-terminus: L-gulonolactone oxidase 3 (585 aa).

The N-terminal stretch at 1-24 is a signal peptide; it reads MRYSHTLQQFSILSFFVTIWTVQS. An FAD-binding PCMH-type domain is found at 51 to 233; that stretch reads KTCHAANVTY…SKVKLSIEKA (183 aa).

It belongs to the oxygen-dependent FAD-linked oxidoreductase family. FAD serves as cofactor.

The protein localises to the vacuole. The enzyme catalyses L-gulono-1,4-lactone + O2 = L-ascorbate + H2O2 + H(+). It participates in cofactor biosynthesis; L-ascorbate biosynthesis. Functionally, catalyzes the oxidation of L-gulono-1,4-lactone to ascorbic acid. L-gulono-1,4-lactone is oxidized to hydrogen peroxide and L-xylo-hexulonolactone which spontaneously isomerizes to L-ascorbate. This chain is L-gulonolactone oxidase 3, found in Arabidopsis thaliana (Mouse-ear cress).